Here is a 304-residue protein sequence, read N- to C-terminus: Agmatinase (304 aa).

Mn(2+) contacts are provided by histidine 126, aspartate 149, histidine 151, aspartate 153, aspartate 230, and aspartate 232.

The protein belongs to the arginase family. Agmatinase subfamily. Mn(2+) is required as a cofactor.

The enzyme catalyses agmatine + H2O = urea + putrescine. The protein operates within amine and polyamine biosynthesis; putrescine biosynthesis via agmatine pathway; putrescine from agmatine: step 1/1. Its function is as follows. Catalyzes the formation of putrescine from agmatine. This is Agmatinase from Edwardsiella ictaluri (strain 93-146).